We begin with the raw amino-acid sequence, 219 residues long: uncharacterized protein (219 aa).

The next 2 helical transmembrane spans lie at 8-28 and 194-214; these read MILFLLVGLAVVLSGCATLSV and GIPGFEAALAIVGLLAAGLLF.

The protein resides in the cell membrane. This is an uncharacterized protein from Archaeoglobus fulgidus (strain ATCC 49558 / DSM 4304 / JCM 9628 / NBRC 100126 / VC-16).